We begin with the raw amino-acid sequence, 237 residues long: MGRKSSKAKEKKQKRLEERAAMDAVCAKVDAANRLGDPLEAFPVFKKYDRNGLNVSIECKRVSGLEPATVDWAFDLTKTNMQTMYEQSEWGWKDREKREEMTDDRAWYLIAWENSSIPVAFSHFRFDVECGDEVLYCYEVQLESKVRRKGLGKFLIQILQLMANSTQMKKVMLTVFKHNHGAYQFFREALQFEIDDSSPSMSGCCGEDCSYEILSRRTKFGDSQHSHTGGHCGGCCH.

Residue Gly2 is the site of N-myristoyl glycine attachment. In terms of domain architecture, N-acetyltransferase spans 63–216; it reads SGLEPATVDW…EDCSYEILSR (154 aa). Substrate is bound by residues Tyr85, 127–129, and Tyr138; that span reads DVE. Acetyl-CoA contacts are provided by residues 140–142 and 148–153; these read VQL and RKGLGK. Thr174 provides a ligand contact to substrate. Asn179 is a binding site for acetyl-CoA. Substrate-binding residues include Ser197 and Tyr211.

This sequence belongs to the acetyltransferase family. NAA40 subfamily.

Its subcellular location is the cytoplasm. The protein localises to the nucleus. It carries out the reaction N-terminal L-seryl-[histone H4] + acetyl-CoA = N-terminal N(alpha)-acetyl-L-seryl-[histone H4] + CoA + H(+). It catalyses the reaction N-terminal L-seryl-[histone H2A] + acetyl-CoA = N-terminal N(alpha)-acetyl-L-seryl-[histone H2A] + CoA + H(+). Its function is as follows. N-alpha-acetyltransferase that specifically mediates the acetylation of the N-terminal residues of histones H4 and H2A. In contrast to other N-alpha-acetyltransferase, has a very specific selectivity for histones H4 and H2A N-terminus and specifically recognizes the 'Ser-Gly-Arg-Gly sequence'. Acts as a negative regulator of apoptosis. May play a role in hepatic lipid metabolism. This chain is N-alpha-acetyltransferase 40, found in Mus musculus (Mouse).